Consider the following 72-residue polypeptide: Translation initiation factor IF-1 (72 aa).

Residues 1-72 (MAKEDTLEFP…TKGRINYRFK (72 aa)) form the S1-like domain.

Belongs to the IF-1 family. As to quaternary structure, component of the 30S ribosomal translation pre-initiation complex which assembles on the 30S ribosome in the order IF-2 and IF-3, IF-1 and N-formylmethionyl-tRNA(fMet); mRNA recruitment can occur at any time during PIC assembly.

The protein resides in the cytoplasm. In terms of biological role, one of the essential components for the initiation of protein synthesis. Stabilizes the binding of IF-2 and IF-3 on the 30S subunit to which N-formylmethionyl-tRNA(fMet) subsequently binds. Helps modulate mRNA selection, yielding the 30S pre-initiation complex (PIC). Upon addition of the 50S ribosomal subunit IF-1, IF-2 and IF-3 are released leaving the mature 70S translation initiation complex. The protein is Translation initiation factor IF-1 of Ruegeria sp. (strain TM1040) (Silicibacter sp.).